Reading from the N-terminus, the 466-residue chain is Ribulose bisphosphate carboxylase large chain (466 aa).

N6,N6,N6-trimethyllysine is present on Lys-5. Substrate contacts are provided by Asn-114 and Thr-164. Lys-166 functions as the Proton acceptor in the catalytic mechanism. Lys-168 contacts substrate. Mg(2+)-binding residues include Lys-192, Asp-194, and Glu-195. Position 192 is an N6-carboxylysine (Lys-192). The Proton acceptor role is filled by His-285. 3 residues coordinate substrate: Arg-286, His-318, and Ser-370.

This sequence belongs to the RuBisCO large chain family. Type I subfamily. In terms of assembly, heterohexadecamer of 8 large chains and 8 small chains; disulfide-linked. The disulfide link is formed within the large subunit homodimers. It depends on Mg(2+) as a cofactor. Post-translationally, the disulfide bond which can form in the large chain dimeric partners within the hexadecamer appears to be associated with oxidative stress and protein turnover.

The protein localises to the plastid. The protein resides in the chloroplast. The catalysed reaction is 2 (2R)-3-phosphoglycerate + 2 H(+) = D-ribulose 1,5-bisphosphate + CO2 + H2O. It carries out the reaction D-ribulose 1,5-bisphosphate + O2 = 2-phosphoglycolate + (2R)-3-phosphoglycerate + 2 H(+). Its function is as follows. RuBisCO catalyzes two reactions: the carboxylation of D-ribulose 1,5-bisphosphate, the primary event in carbon dioxide fixation, as well as the oxidative fragmentation of the pentose substrate in the photorespiration process. Both reactions occur simultaneously and in competition at the same active site. This is Ribulose bisphosphate carboxylase large chain from Cucurbita pepo (Vegetable marrow).